Reading from the N-terminus, the 883-residue chain is Aldehyde-alcohol dehydrogenase (883 aa).

The interval 13–456 is aldehyde dehydrogenase; that stretch reads KLVAEKHVDE…DNVSAINLLN (444 aa). NAD(+) is bound by residues 121 to 126, G206, and G224; that span reads ITPTTN. C257 functions as the Nucleophile in the catalytic mechanism. NAD(+) contacts are provided by residues E355, L435, and 438-443; that span reads GSYGRN. The linker stretch occupies residues 457-464; the sequence is IKKVGRRR. Residues D500, D534, 561 to 565, 612 to 613, V625, K634, and L653 contribute to the NAD(+) site; these read GSPMD and TT. The Fe cation site is built by D668, H672, H736, and H750.

This sequence in the N-terminal section; belongs to the aldehyde dehydrogenase family. The protein in the C-terminal section; belongs to the iron-containing alcohol dehydrogenase family. The cofactor is Fe(2+).

The enzyme catalyses an aldehyde + NAD(+) + H2O = a carboxylate + NADH + 2 H(+). It carries out the reaction ethanol + NAD(+) = acetaldehyde + NADH + H(+). Functionally, has alcohol dehydrogenase activity. Has aldehyde dehydrogenase activity. Plays a role in enhancing virulence in mice, under ethanol stress conditions, perhaps by inducing expression of pneumolysin (Ply) and increasing production of hydrogen peroxide H(2)O(2). May be considered a potential virulence factor. The chain is Aldehyde-alcohol dehydrogenase from Streptococcus pneumoniae serotype 2 (strain D39 / NCTC 7466).